The chain runs to 421 residues: Enolase (421 aa).

Gln-162 is a (2R)-2-phosphoglycerate binding site. Catalysis depends on Glu-204, which acts as the Proton donor. Mg(2+) is bound by residues Asp-241, Glu-284, and Asp-311. Residues Lys-336, Arg-365, Ser-366, and Lys-387 each contribute to the (2R)-2-phosphoglycerate site. Lys-336 serves as the catalytic Proton acceptor.

Belongs to the enolase family. Requires Mg(2+) as cofactor.

Its subcellular location is the cytoplasm. The protein localises to the secreted. It is found in the cell surface. It carries out the reaction (2R)-2-phosphoglycerate = phosphoenolpyruvate + H2O. Its pathway is carbohydrate degradation; glycolysis; pyruvate from D-glyceraldehyde 3-phosphate: step 4/5. In terms of biological role, catalyzes the reversible conversion of 2-phosphoglycerate (2-PG) into phosphoenolpyruvate (PEP). It is essential for the degradation of carbohydrates via glycolysis. This Nautilia profundicola (strain ATCC BAA-1463 / DSM 18972 / AmH) protein is Enolase.